Here is a 699-residue protein sequence, read N- to C-terminus: Elongation factor G (699 aa).

In terms of domain architecture, tr-type G spans 8 to 287; that stretch reads EKLRNIGIVA…AVIDYLPSPI (280 aa). Residues 17-24, 85-89, and 139-142 each bind GTP; these read AHIDAGKT, DTPGH, and NKMD.

The protein belongs to the TRAFAC class translation factor GTPase superfamily. Classic translation factor GTPase family. EF-G/EF-2 subfamily.

Its subcellular location is the cytoplasm. In terms of biological role, catalyzes the GTP-dependent ribosomal translocation step during translation elongation. During this step, the ribosome changes from the pre-translocational (PRE) to the post-translocational (POST) state as the newly formed A-site-bound peptidyl-tRNA and P-site-bound deacylated tRNA move to the P and E sites, respectively. Catalyzes the coordinated movement of the two tRNA molecules, the mRNA and conformational changes in the ribosome. The sequence is that of Elongation factor G (fusA) from Aquifex aeolicus (strain VF5).